The following is a 284-amino-acid chain: UPF0354 protein SERP1303 (284 aa).

It belongs to the UPF0354 family.

The protein is UPF0354 protein SERP1303 of Staphylococcus epidermidis (strain ATCC 35984 / DSM 28319 / BCRC 17069 / CCUG 31568 / BM 3577 / RP62A).